Reading from the N-terminus, the 500-residue chain is MAMHPRKDWYELTRATNWTPSYVTEEQLFPERMSGHMGIPLEKWESYDEPYKTSYPEYVSIQREKDAGAYSVKAALERAKIYENSDPGWISTLKSHYGAIAVGEYAAVTGEGRMARFSKAPGNRNMATFGMMDELRHGQLQLFFPHEYCKKDRQFDWAWRAYHSNEWAAIAAKHFFDDIITGRDAISVAIMLTFSFETGFTNMQFLGLAADAAEAGDYTFANLISSIQTDESRHAQQGGPALQLLIENGKREEAQKKVDMAIWRAWRLFAVLTGPVMDYYTPLEDRSQSFKEFMYEWIIGQFERSLIDLGLDKPWYWDLFLKDIDELHHSYHMGVWYWRTTAWWNPAAGVTPEERDWLEEKYPGWNKRWGRCWDVITENVLNDRMDLVSPETLPSVCNMSQIPLVGVPGDDWNIEVFSLEHNGRLYHFGSEVDRWVFQQDPVQYQNHMNIVDRFLAGQIQPMTLEGALKYMGFQSIEEMGKDAHDFAWADKCKPAMKKSA.

Residues Glu104, Glu134, His137, Glu197, Glu231, and His234 each contribute to the Fe cation site.

This sequence belongs to the TmoA/XamoA family. As to quaternary structure, the alkene monooxygenase multicomponent enzyme system is composed of an electron transfer component and a monooxygenase component interacting with the effector protein TmoD. The electron transfer component is composed of a ferredoxin reductase (TmoF) and a ferredoxin (TmoC), and the monooxygenase component is formed by a heterohexamer (dimer of heterotrimers) of two alpha subunits (TmoA), two beta subunits (TmoE) and two gamma subunits (TmoB). Fe(2+) serves as cofactor.

The catalysed reaction is toluene + NADH + O2 + H(+) = 4-methylphenol + NAD(+) + H2O. The protein operates within xenobiotic degradation; toluene degradation. With respect to regulation, inhibited by Zn(2+) and Cu(2+). In terms of biological role, component of the toluene-4-monooxygenase multicomponent enzyme system which catalyzes the O2- and NADH-dependent hydroxylation of toluene to form p-cresol. Also able to convert benzene to phenol, catechol, and 1,2,3-trihydroxybenzene by successive hydroxylations. The polypeptide is Toluene-4-monooxygenase system, hydroxylase component subunit alpha (Ectopseudomonas mendocina (Pseudomonas mendocina)).